The following is a 162-amino-acid chain: MTDMNPDIEKDQTSDEVTVETTSVFRADFLSELDAPAQAGTESAVSGVEGLPPGSALLVVKRGPNAGSRFLLDQAITSAGRHPDSDIFLDDVTVSRRHAEFRLENNEFNVVDVGSLNGTYVNREPVDSAVLANGDEVQIGKFRLVFLTGPKQGEDDGSTGGP.

Thr21 is subject to Phosphothreonine; by PknG. Thr22 is subject to Phosphothreonine; by PknB. The FHA domain occupies 77–126; that stretch reads TSAGRHPDSDIFLDDVTVSRRHAEFRLENNEFNVVDVGSLNGTYVNREPV.

Monomer. Post-translationally, phosphorylated on Thr-22 by PknB. Phosphorylated on Thr-21 by PknG. Phosphorylation at either Thr-21 or Thr-22 prevents binding to target enzymes.

Functionally, involved in regulation of glutamate metabolism. The polypeptide is Glycogen accumulation regulator GarA (garA) (Mycobacterium tuberculosis (strain CDC 1551 / Oshkosh)).